Consider the following 974-residue polypeptide: Bifunctional glutamine synthetase adenylyltransferase/adenylyl-removing enzyme (974 aa).

Residues 1–464 (MKNAFLKTQL…HYAALFENEQ (464 aa)) are adenylyl removase. Positions 468-974 (LEIGNLVFTG…YSIFKQVMKY (507 aa)) are adenylyl transferase.

This sequence belongs to the GlnE family. Mg(2+) is required as a cofactor.

It carries out the reaction [glutamine synthetase]-O(4)-(5'-adenylyl)-L-tyrosine + phosphate = [glutamine synthetase]-L-tyrosine + ADP. The enzyme catalyses [glutamine synthetase]-L-tyrosine + ATP = [glutamine synthetase]-O(4)-(5'-adenylyl)-L-tyrosine + diphosphate. In terms of biological role, involved in the regulation of glutamine synthetase GlnA, a key enzyme in the process to assimilate ammonia. When cellular nitrogen levels are high, the C-terminal adenylyl transferase (AT) inactivates GlnA by covalent transfer of an adenylyl group from ATP to specific tyrosine residue of GlnA, thus reducing its activity. Conversely, when nitrogen levels are low, the N-terminal adenylyl removase (AR) activates GlnA by removing the adenylyl group by phosphorolysis, increasing its activity. The regulatory region of GlnE binds the signal transduction protein PII (GlnB) which indicates the nitrogen status of the cell. The protein is Bifunctional glutamine synthetase adenylyltransferase/adenylyl-removing enzyme of Bartonella henselae (strain ATCC 49882 / DSM 28221 / CCUG 30454 / Houston 1) (Rochalimaea henselae).